We begin with the raw amino-acid sequence, 695 residues long: Variediene synthase (695 aa).

A disordered region spans residues 1 to 23 (MVPTSLSPDDTSDPVPRSSSDIQ). Residues 7-332 (SPDDTSDPVP…PRYHPWLCEE (326 aa)) are terpene cyclase. Aspartate 98 lines the Mg(2+) pocket. Substrate-binding positions include aspartate 98, 184–187 (RIID), asparagine 228, 232–236 (SFDIE), and 324–325 (RY). The short motif at 98 to 102 (DNVVE) is the DDXXD 1 element. The NSE/DTE signature appears at 228–236 (NDYFSFDIE). A disordered region spans residues 353–392 (RRSISGDSISSESSVWSGASDRSARSSVSSAPSLDEGKEP). The span at 357–385 (SGDSISSESSVWSGASDRSARSSVSSAPS) shows a compositional bias: low complexity. Residues lysine 415, arginine 418, and histidine 447 each contribute to the isopentenyl diphosphate site. The Mg(2+) site is built by aspartate 454 and aspartate 458. The DDXXD 2 motif lies at 454-458 (DDIED). Arginine 463 is a binding site for dimethylallyl diphosphate. Residue arginine 464 coordinates isopentenyl diphosphate. The dimethylallyl diphosphate site is built by lysine 541, threonine 542, glutamine 579, asparagine 586, lysine 595, and lysine 605.

This sequence in the N-terminal section; belongs to the terpene synthase family. The protein in the C-terminal section; belongs to the FPP/GGPP synthase family. As to quaternary structure, hexamer. The cofactor is Mg(2+).

It carries out the reaction isopentenyl diphosphate + (2E,6E)-farnesyl diphosphate = (2E,6E,10E)-geranylgeranyl diphosphate + diphosphate. The enzyme catalyses (2E,6E,10E)-geranylgeranyl diphosphate = variediene + diphosphate. It participates in secondary metabolite biosynthesis; terpenoid biosynthesis. Bifunctional terpene synthase converts DMAPP and IPP, and also GGPP, into variediene as a single product. The C-terminal prenyltransferase domain of AbVS catalyzes formation of GGPP, whereas the N-terminal terpene cyclase domain catalyzes the cyclization of GGPP to variediene. This chain is Variediene synthase, found in Aspergillus brasiliensis (strain CBS 101740 / IMI 381727 / IBT 21946).